An 801-amino-acid polypeptide reads, in one-letter code: Phenylalanine--tRNA ligase beta subunit (801 aa).

Positions 39 to 153 (AEGLSKLVVG…DEAVPGDAIF (115 aa)) constitute a tRNA-binding domain. The region spanning 406 to 481 (TEPVEVSTNL…RIYGYDKLPT (76 aa)) is the B5 domain. Residues Asp459, Asp465, Glu468, and Glu469 each coordinate Mg(2+). The region spanning 708–801 (TKFPAMTRDI…LTEQVGAEVR (94 aa)) is the FDX-ACB domain.

The protein belongs to the phenylalanyl-tRNA synthetase beta subunit family. Type 1 subfamily. As to quaternary structure, tetramer of two alpha and two beta subunits. It depends on Mg(2+) as a cofactor.

The protein resides in the cytoplasm. The catalysed reaction is tRNA(Phe) + L-phenylalanine + ATP = L-phenylalanyl-tRNA(Phe) + AMP + diphosphate + H(+). This chain is Phenylalanine--tRNA ligase beta subunit, found in Streptococcus pyogenes serotype M3 (strain SSI-1).